Reading from the N-terminus, the 213-residue chain is Adenylate kinase (213 aa).

An ATP-binding site is contributed by 10-15 (GCGKGT). The tract at residues 30 to 59 (STGDLMRKEISLNTTLGLKCQEYMNAGKYV) is NMP. Residues Thr-31, Arg-36, 57–59 (KYV), 83–86 (GYPR), and Gln-90 each bind AMP. Residues 124 to 161 (NRLVCPLCKASFNLETRKPKQEGLCDFDNTKLVKRSDD) form an LID region. Arg-125 serves as a coordination point for ATP. Zn(2+)-binding residues include Cys-128 and Cys-131. 134 to 135 (SF) contributes to the ATP binding site. Positions 148 and 151 each coordinate Zn(2+). AMP-binding residues include Arg-158 and Arg-169. Asn-197 contributes to the ATP binding site.

It belongs to the adenylate kinase family. Monomer.

The protein localises to the cytoplasm. It carries out the reaction AMP + ATP = 2 ADP. Its pathway is purine metabolism; AMP biosynthesis via salvage pathway; AMP from ADP: step 1/1. Functionally, catalyzes the reversible transfer of the terminal phosphate group between ATP and AMP. Plays an important role in cellular energy homeostasis and in adenine nucleotide metabolism. This chain is Adenylate kinase, found in Mycoplasma capricolum subsp. capricolum (strain California kid / ATCC 27343 / NCTC 10154).